The primary structure comprises 157 residues: Arginine repressor (157 aa).

Belongs to the ArgR family.

It is found in the cytoplasm. Its pathway is amino-acid biosynthesis; L-arginine biosynthesis [regulation]. Regulates arginine biosynthesis genes. The sequence is that of Arginine repressor from Colwellia psychrerythraea (strain 34H / ATCC BAA-681) (Vibrio psychroerythus).